The following is a 410-amino-acid chain: Histidine--tRNA ligase (410 aa).

This sequence belongs to the class-II aminoacyl-tRNA synthetase family.

It is found in the cytoplasm. It carries out the reaction tRNA(His) + L-histidine + ATP = L-histidyl-tRNA(His) + AMP + diphosphate + H(+). In Methanocorpusculum labreanum (strain ATCC 43576 / DSM 4855 / Z), this protein is Histidine--tRNA ligase.